The following is a 141-amino-acid chain: Hemoglobin subunit alpha (141 aa).

The 141-residue stretch at 1–141 folds into the Globin domain; sequence VLSEEDKSHV…VSAMLTSKYR (141 aa). H58 is a binding site for O2. H87 serves as a coordination point for heme b.

The protein belongs to the globin family. As to quaternary structure, heterotetramer of two alpha chains and two beta chains. Red blood cells.

Involved in oxygen transport from the lung to the various peripheral tissues. The protein is Hemoglobin subunit alpha (HBA) of Caiman crocodilus (Spectacled caiman).